The primary structure comprises 718 residues: DNA ligase (718 aa).

NAD(+) is bound by residues 44–48, 93–94, and E127; these read DADYD and SL. K129 acts as the N6-AMP-lysine intermediate in catalysis. Positions 150, 186, 302, and 326 each coordinate NAD(+). Residues C432, C435, C456, and C462 each coordinate Zn(2+). Residues 640–718 enclose the BRCT domain; sequence TAGSPVAGKT…EDEWLALISG (79 aa).

The protein belongs to the NAD-dependent DNA ligase family. LigA subfamily. The cofactor is Mg(2+). Mn(2+) is required as a cofactor.

It catalyses the reaction NAD(+) + (deoxyribonucleotide)n-3'-hydroxyl + 5'-phospho-(deoxyribonucleotide)m = (deoxyribonucleotide)n+m + AMP + beta-nicotinamide D-nucleotide.. Functionally, DNA ligase that catalyzes the formation of phosphodiester linkages between 5'-phosphoryl and 3'-hydroxyl groups in double-stranded DNA using NAD as a coenzyme and as the energy source for the reaction. It is essential for DNA replication and repair of damaged DNA. The chain is DNA ligase from Rhizobium etli (strain ATCC 51251 / DSM 11541 / JCM 21823 / NBRC 15573 / CFN 42).